The sequence spans 1030 residues: uncharacterized protein (1030 aa).

Over residues 1 to 15 the composition is skewed to polar residues; it reads MSENSTDSKNFQFSE. The disordered stretch occupies residues 1 to 53; that stretch reads MSENSTDSKNFQFSEGSRESSNDELKVLLRDTETKEDEKSSFSNSEEESIIEN. The span at 16–40 shows a compositional bias: basic and acidic residues; the sequence is GSRESSNDELKVLLRDTETKEDEKS. Ser41 carries the phosphoserine modification. The 157-residue stretch at 134 to 290 folds into the Helicase ATP-binding domain; sequence IKCVERMESV…WISEIHKQPC (157 aa). 147-154 serves as a coordination point for ATP; that stretch reads AHTSAGKT. Residues 238-241 carry the DEVH box motif; sequence DEVH. The Helicase C-terminal domain maps to 357–561; it reads SLERIINMVL…GMILNLMRIE (205 aa).

The protein belongs to the helicase family. SKI2 subfamily.

The protein localises to the nucleus. This is an uncharacterized protein from Schizosaccharomyces pombe (strain 972 / ATCC 24843) (Fission yeast).